A 159-amino-acid chain; its full sequence is U1 small nuclear ribonucleoprotein C (159 aa).

Residues 4–36 (FYCDYCDTYLTHDSPSVRKTHCSGRKHKENVKD) form a Matrin-type zinc finger. Tyrosine 8 bears the Phosphotyrosine mark. Phosphoserine is present on serine 17. Lysine 52 is modified (N6-acetyllysine). Disordered stretches follow at residues 62–96 (IPPT…PAPH) and 140–159 (RPPA…RPDR). Over residues 63 to 92 (PPTPFSAPPPAGAMIPPPPSLPGPPRPGMM) the composition is skewed to pro residues.

This sequence belongs to the U1 small nuclear ribonucleoprotein C family. In terms of assembly, component of the U1 snRNP. The U1 snRNP is composed of the U1 snRNA and the 7 core Sm proteins SNRPB, SNRPD1, SNRPD2, SNRPD3, SNRPE, SNRPF and SNRPG that assemble in a heptameric protein ring on the Sm site of the small nuclear RNA to form the core snRNP, and at least 3 U1 snRNP-specific proteins SNRNP70/U1-70K, SNRPA/U1-A and SNRPC/U1-C. SNRPC/U1-C interacts with U1 snRNA and the 5' splice-site region of the pre-mRNA. Interacts (via N-terminus) with TIA1 (via C-terminus); thereby promoting spliceosomal U1 snRNP recruitment to 5' splice sites.

The protein resides in the nucleus. Its function is as follows. Component of the spliceosomal U1 snRNP, which is essential for recognition of the pre-mRNA 5' splice-site and the subsequent assembly of the spliceosome. SNRPC/U1-C is directly involved in initial 5' splice-site recognition for both constitutive and regulated alternative splicing. The interaction with the 5' splice-site seems to precede base-pairing between the pre-mRNA and the U1 snRNA. Stimulates commitment or early (E) complex formation by stabilizing the base pairing of the 5' end of the U1 snRNA and the 5' splice-site region. The chain is U1 small nuclear ribonucleoprotein C from Homo sapiens (Human).